A 457-amino-acid chain; its full sequence is 3-isopropylmalate dehydratase large subunit (457 aa).

Residues Cys-337, Cys-397, and Cys-400 each coordinate [4Fe-4S] cluster.

The protein belongs to the aconitase/IPM isomerase family. LeuC type 1 subfamily. As to quaternary structure, heterodimer of LeuC and LeuD. [4Fe-4S] cluster is required as a cofactor.

It catalyses the reaction (2R,3S)-3-isopropylmalate = (2S)-2-isopropylmalate. The protein operates within amino-acid biosynthesis; L-leucine biosynthesis; L-leucine from 3-methyl-2-oxobutanoate: step 2/4. Its function is as follows. Catalyzes the isomerization between 2-isopropylmalate and 3-isopropylmalate, via the formation of 2-isopropylmaleate. This Oenococcus oeni (strain ATCC BAA-331 / PSU-1) protein is 3-isopropylmalate dehydratase large subunit.